The sequence spans 166 residues: Cytochrome c-type biogenesis protein CcmE (166 aa).

Topologically, residues 1 to 8 are cytoplasmic; it reads MNAVRRKK. A helical; Signal-anchor for type II membrane protein membrane pass occupies residues 9–29; it reads LMWVMFTLAGAVIAVALVIYA. The Periplasmic portion of the chain corresponds to 30-166; it reads IGKQTDYYFD…KLHETKTLQQ (137 aa). Histidine 124 and tyrosine 128 together coordinate heme. The segment at 133 to 166 is disordered; it reads VAKSMKENNRSGAVPSSEQYNPAEKLHETKTLQQ. The segment covering 142-152 has biased composition (polar residues); that stretch reads RSGAVPSSEQY. Residues 156-166 show a composition bias toward basic and acidic residues; the sequence is EKLHETKTLQQ.

It belongs to the CcmE/CycJ family.

It is found in the cell inner membrane. In terms of biological role, heme chaperone required for the biogenesis of c-type cytochromes. Transiently binds heme delivered by CcmC and transfers the heme to apo-cytochromes in a process facilitated by CcmF and CcmH. The polypeptide is Cytochrome c-type biogenesis protein CcmE (Psychrobacter arcticus (strain DSM 17307 / VKM B-2377 / 273-4)).